A 76-amino-acid polypeptide reads, in one-letter code: Sulfur carrier protein TusA (76 aa).

Residue C14 is the Cysteine persulfide intermediate of the active site.

It belongs to the sulfur carrier protein TusA family. In terms of assembly, interacts with IscS.

Its subcellular location is the cytoplasm. It functions in the pathway tRNA modification. Sulfur carrier protein involved in sulfur trafficking in the cell. Part of a sulfur-relay system required for 2-thiolation during synthesis of 2-thiouridine of the modified wobble base 5-methylaminomethyl-2-thiouridine (mnm(5)s(2)U) in tRNA. Interacts with IscS and stimulates its cysteine desulfurase activity. Accepts an activated sulfur from IscS, which is then transferred to TusD, and thus determines the direction of sulfur flow from IscS to 2-thiouridine formation. Also appears to be involved in sulfur transfer for the biosynthesis of molybdopterin. The chain is Sulfur carrier protein TusA from Buchnera aphidicola subsp. Acyrthosiphon pisum (strain 5A).